The chain runs to 309 residues: GTP cyclohydrolase FolE2 (309 aa).

It belongs to the GTP cyclohydrolase IV family.

The catalysed reaction is GTP + H2O = 7,8-dihydroneopterin 3'-triphosphate + formate + H(+). It functions in the pathway cofactor biosynthesis; 7,8-dihydroneopterin triphosphate biosynthesis; 7,8-dihydroneopterin triphosphate from GTP: step 1/1. Converts GTP to 7,8-dihydroneopterin triphosphate. The chain is GTP cyclohydrolase FolE2 from Serratia proteamaculans (strain 568).